The chain runs to 740 residues: Ion-translocating oxidoreductase complex subunit C (740 aa).

4Fe-4S ferredoxin-type domains are found at residues 369 to 397 and 407 to 436; these read GEPQ…QQLY and KATT…VQYF. 8 residues coordinate [4Fe-4S] cluster: cysteine 377, cysteine 380, cysteine 383, cysteine 387, cysteine 416, cysteine 419, cysteine 422, and cysteine 426. The tract at residues 598–716 is disordered; sequence AKARKLEQQQ…EPEEQVDPRK (119 aa).

It belongs to the 4Fe4S bacterial-type ferredoxin family. RnfC subfamily. In terms of assembly, the complex is composed of six subunits: RsxA, RsxB, RsxC, RsxD, RsxE and RsxG. [4Fe-4S] cluster is required as a cofactor.

The protein localises to the cell inner membrane. Part of a membrane-bound complex that couples electron transfer with translocation of ions across the membrane. Required to maintain the reduced state of SoxR. This Shigella flexneri serotype 5b (strain 8401) protein is Ion-translocating oxidoreductase complex subunit C.